A 196-amino-acid chain; its full sequence is MESADSGRSDPVKGDDPGPSFVSSPPATPSRYESQKRRDWNTFLQYLKNHKPPLALSRCSGAHVIEFLKYLDQFGKTKVHVAACPYFGHQQPPSPCSCPLKQAWGSLDALIGRLRAAYEENGGRPDSNPFAARAVRIYLREVRESQAKARGIPYEKKKRKRPPTVTTVRVDVASSRQSDGDPCNVGAPSVAEAVPP.

Residues 1-16 are compositionally biased toward basic and acidic residues; that stretch reads MESADSGRSDPVKGDD. 2 disordered regions span residues 1-36 and 149-196; these read MESADSGRSDPVKGDDPGPSFVSSPPATPSRYESQK and ARGI…AVPP. Residues 31-158 enclose the ALOG domain; it reads RYESQKRRDW…ARGIPYEKKK (128 aa). Positions 156 to 160 match the Nuclear localization signal motif; the sequence is KKKRK.

The protein belongs to the plant homeotic and developmental regulators ALOG protein family.

It is found in the nucleus. Probable transcription regulator that acts as a developmental regulator by promoting cell growth in response to light. The chain is Protein LIGHT-DEPENDENT SHORT HYPOCOTYLS 6 (LSH6) from Arabidopsis thaliana (Mouse-ear cress).